The sequence spans 79 residues: Ornithine decarboxylase (79 aa).

Pyridoxal 5'-phosphate-binding positions include Ser-8, Gly-45, and 75-78 (EPGR).

Belongs to the Orn/Lys/Arg decarboxylase class-II family. Homodimer. Only the dimer is catalytically active, as the active sites are constructed of residues from both monomers. It depends on pyridoxal 5'-phosphate as a cofactor.

It localises to the cytoplasm. It carries out the reaction L-ornithine + H(+) = putrescine + CO2. It participates in amine and polyamine biosynthesis; putrescine biosynthesis via L-ornithine pathway; putrescine from L-ornithine: step 1/1. With respect to regulation, inhibited by antizyme (AZ) OAZ1 in response to polyamine levels. AZ inhibits the assembly of the functional homodimer by binding to ODC monomers and targeting them for ubiquitin-independent proteolytic destruction by the 26S proteasome. Functionally, catalyzes the first and rate-limiting step of polyamine biosynthesis that converts ornithine into putrescine, which is the precursor for the polyamines, spermidine and spermine. Polyamines are essential for cell proliferation and are implicated in cellular processes, ranging from DNA replication to apoptosis. In Paracoccidioides brasiliensis, this protein is Ornithine decarboxylase (ODC).